A 414-amino-acid polypeptide reads, in one-letter code: tRNA N6-adenosine threonylcarbamoyltransferase, mitochondrial (414 aa).

A mitochondrion-targeting transit peptide spans 1-29 (MLILTKTAGVFFKPSKRKVYEFLRSFNFH). Residues Lys74 and Lys140 each carry the N6-acetyllysine modification. Residues His147 and His151 each coordinate a divalent metal cation. Substrate-binding positions include 169–173 (LISGG) and Asp202. Residue Lys203 is modified to N6-acetyllysine. 2 residues coordinate substrate: Gly222 and Glu226. An N6-acetyllysine mark is found at Lys230, Lys240, and Lys299. Substrate is bound by residues 329 to 330 (SN) and Thr357. Residue Asp358 coordinates a divalent metal cation.

It belongs to the KAE1 / TsaD family. Monomer. Requires a divalent metal cation as cofactor. Widely expressed, with maximum expression in pituitary gland, prostate, rectum and uterus.

Its subcellular location is the mitochondrion. The catalysed reaction is L-threonylcarbamoyladenylate + adenosine(37) in tRNA = N(6)-L-threonylcarbamoyladenosine(37) in tRNA + AMP + H(+). Functionally, required for the formation of a threonylcarbamoyl group on adenosine at position 37 (t(6)A37) in mitochondrial tRNAs that read codons beginning with adenine. Probably involved in the transfer of the threonylcarbamoyl moiety of threonylcarbamoyl-AMP (TC-AMP) to the N6 group of A37. Involved in mitochondrial genome maintenance. In Homo sapiens (Human), this protein is tRNA N6-adenosine threonylcarbamoyltransferase, mitochondrial.